A 246-amino-acid polypeptide reads, in one-letter code: Mast cell protease 1 (246 aa).

Positions 1–18 (MQALLFLMALLLPSGAGA) are cleaved as a signal peptide. A propeptide spans 19-20 (EE) (activation peptide). Positions 21–244 (IIGGVEARPH…YVPWIKTVIN (224 aa)) constitute a Peptidase S1 domain. A disulfide bridge connects residues C50 and C66. H65 functions as the Charge relay system in the catalytic mechanism. The N-linked (GlcNAc...) asparagine glycan is linked to N102. D109 (charge relay system) is an active-site residue. Intrachain disulfides connect C143/C208 and C174/C187. The active-site Charge relay system is the S202.

Belongs to the peptidase S1 family. Granzyme subfamily. As to expression, mucosal mast cells.

The protein localises to the secreted. It localises to the cytoplasmic granule. Its function is as follows. Has a chymotrypsin-like activity. This Mus musculus (Mouse) protein is Mast cell protease 1 (Mcpt1).